The chain runs to 484 residues: Alginate production protein AlgE (484 aa).

A signal peptide spans 1–25 (MSRKQRISAGLGLGASLLCCNPLFA). Positions 93-103 (TDPTDPNEEPG) are enriched in acidic residues. The segment at 93-118 (TDPTDPNEEPGGDPANGFSRDSSRDP) is disordered.

This sequence belongs to the AlgE family.

It localises to the cell outer membrane. It functions in the pathway glycan biosynthesis; alginate biosynthesis. Functionally, has non-porin-like, channel-forming properties and probably functions as an alginate permeability pore. This chain is Alginate production protein AlgE (algE), found in Azotobacter vinelandii.